Here is a 59-residue protein sequence, read N- to C-terminus: MAQPKKKTSKSRRNMRRSHDHVATPNVVYCECGEPIIPHRACSSCGSYKGRQVINSEDA.

Over residues 1 to 19 the composition is skewed to basic residues; the sequence is MAQPKKKTSKSRRNMRRSH. Positions 1-20 are disordered; that stretch reads MAQPKKKTSKSRRNMRRSHD.

It belongs to the bacterial ribosomal protein bL32 family.

The protein is Large ribosomal subunit protein bL32 of Maridesulfovibrio salexigens (strain ATCC 14822 / DSM 2638 / NCIMB 8403 / VKM B-1763) (Desulfovibrio salexigens).